We begin with the raw amino-acid sequence, 161 residues long: 2-C-methyl-D-erythritol 2,4-cyclodiphosphate synthase (161 aa).

The a divalent metal cation site is built by Asp-8 and His-10. Residues 8 to 10 (DLH) and 34 to 35 (HS) contribute to the 4-CDP-2-C-methyl-D-erythritol 2-phosphate site. His-42 provides a ligand contact to a divalent metal cation. 4-CDP-2-C-methyl-D-erythritol 2-phosphate is bound by residues 56–58 (DIG), 100–106 (AEYPKML), and Arg-142.

Belongs to the IspF family. Homotrimer. Requires a divalent metal cation as cofactor.

The enzyme catalyses 4-CDP-2-C-methyl-D-erythritol 2-phosphate = 2-C-methyl-D-erythritol 2,4-cyclic diphosphate + CMP. It functions in the pathway isoprenoid biosynthesis; isopentenyl diphosphate biosynthesis via DXP pathway; isopentenyl diphosphate from 1-deoxy-D-xylulose 5-phosphate: step 4/6. Functionally, involved in the biosynthesis of isopentenyl diphosphate (IPP) and dimethylallyl diphosphate (DMAPP), two major building blocks of isoprenoid compounds. Catalyzes the conversion of 4-diphosphocytidyl-2-C-methyl-D-erythritol 2-phosphate (CDP-ME2P) to 2-C-methyl-D-erythritol 2,4-cyclodiphosphate (ME-CPP) with a corresponding release of cytidine 5-monophosphate (CMP). The sequence is that of 2-C-methyl-D-erythritol 2,4-cyclodiphosphate synthase from Buchnera aphidicola subsp. Acyrthosiphon pisum (strain 5A).